Consider the following 514-residue polypeptide: 1-pyrroline-5-carboxylate dehydrogenase (514 aa).

Active-site residues include Glu286 and Cys320.

It belongs to the aldehyde dehydrogenase family. RocA subfamily.

The catalysed reaction is L-glutamate 5-semialdehyde + NAD(+) + H2O = L-glutamate + NADH + 2 H(+). Its pathway is amino-acid degradation; L-proline degradation into L-glutamate; L-glutamate from L-proline: step 2/2. The polypeptide is 1-pyrroline-5-carboxylate dehydrogenase (Staphylococcus saprophyticus subsp. saprophyticus (strain ATCC 15305 / DSM 20229 / NCIMB 8711 / NCTC 7292 / S-41)).